The sequence spans 1193 residues: Probable cation-transporting ATPase 13A4 (1193 aa).

Residues 1–32 (MGDHLEKSQHALLNEGDENEMEIFGYRTQGCR) lie on the Cytoplasmic side of the membrane. The stretch at 33-53 (KALCLIGSIFSLGMLPLVFYW) is an intramembrane region. Over 54-198 (RPAWRVWANC…DVEITPIWKL (145 aa)) the chain is Cytoplasmic. A helical membrane pass occupies residues 199-219 (LIKEVLNPFYIFQLFSVCLWF). Residues 220–224 (SEDYK) lie on the Lumenal side of the membrane. Residues 225 to 245 (EYALAIILMSVISIALTVYDL) traverse the membrane as a helical segment. Over 246 to 401 (RQQSVKLHHL…NFKLYRDAIR (156 aa)) the chain is Cytoplasmic. A helical transmembrane segment spans residues 402-422 (FLLCLVGTATIGMVYTLCVYV). The Lumenal segment spans residues 423 to 437 (LSGEPPEEVVRKALD). A helical transmembrane segment spans residues 438 to 458 (VITIAVPPALPAALTTGIIYA). Over 459 to 901 (QRRLKKKGIF…KEGRAALVTS (443 aa)) the chain is Cytoplasmic. The 4-aspartylphosphate intermediate role is filled by aspartate 487. Residues aspartate 849 and aspartate 853 each coordinate Mg(2+). The chain crosses the membrane as a helical span at residues 902–922 (FCMFKYMALYSMIQYVGVLLL). The Lumenal segment spans residues 923 to 933 (YWKTNSLSNYQ). Residues 934 to 954 (FLFQDLAITTLIGVTMNLNGA) form a helical membrane-spanning segment. Topologically, residues 955–973 (NPKLVPFRPAGRLISPPLL) are cytoplasmic. The helical transmembrane segment at 974–994 (LSVVLNILLSLAMHIVGFILV) threads the bilayer. The Lumenal portion of the chain corresponds to 995 to 1036 (QKQPWYIMDYHSVCPVRNESASALAASPSVPEKTRSNSTFAS). A helical transmembrane segment spans residues 1037–1057 (FENTTIWFLGTINCIFVALVF). The Cytoplasmic portion of the chain corresponds to 1058–1071 (SKGKPFRQPTYTNY). A helical transmembrane segment spans residues 1072–1092 (IFVLVLILQMGVCLFILFADI). Over 1093 to 1105 (PEMHRRLDLLCTP) the chain is Lumenal. The chain crosses the membrane as a helical span at residues 1106-1126 (VLWRVYILIMISSNFVVSLAV). The Cytoplasmic segment spans residues 1127–1193 (EKAIIENRAL…PVFESNEEQL (67 aa)).

This sequence belongs to the cation transport ATPase (P-type) (TC 3.A.3) family. Type V subfamily. Expressed in brain and stomach.

The protein localises to the early endosome membrane. It localises to the late endosome membrane. Its subcellular location is the recycling endosome membrane. The catalysed reaction is ATP + H2O = ADP + phosphate + H(+). This chain is Probable cation-transporting ATPase 13A4 (Atp13a4), found in Mus musculus (Mouse).